The following is a 548-amino-acid chain: Viridiflorene synthase (548 aa).

Residues aspartate 301, aspartate 305, aspartate 444, threonine 448, and glutamate 452 each coordinate Mg(2+). The DDXXD motif motif lies at 301–305; the sequence is DDTFD.

This sequence belongs to the terpene synthase family. Tpsa subfamily. The cofactor is Mg(2+). Expressed in stem and leaf trichomes. Detected in roots, fruits and flowers.

It localises to the cytoplasm. It carries out the reaction (2E,6E)-farnesyl diphosphate = viridiflorene + diphosphate. It participates in secondary metabolite biosynthesis; terpenoid biosynthesis. Sesquiterpene synthase involved in the production of viridiflorene from (E,E)-farnesyl diphosphate. Can also use (Z,Z)-FPP to make several unidentified sesquiterpenes. The protein is Viridiflorene synthase of Solanum lycopersicum (Tomato).